The primary structure comprises 84 residues: Magnetosome protein MamR (84 aa).

This sequence belongs to the magnetosome MamR family.

The protein localises to the magnetosome. Its function is as follows. May play a role in controlling magnetite number and size. Coexpression of mamLQRBIEMO in a deletion of the 17 gene mamAB operon restores magnetosome vesicle formation but not magnetite biosynthesis. The polypeptide is Magnetosome protein MamR (Magnetospirillum gryphiswaldense (strain DSM 6361 / JCM 21280 / NBRC 15271 / MSR-1)).